We begin with the raw amino-acid sequence, 238 residues long: Adenylate dimethylallyltransferase (238 aa).

The protein belongs to the isopentenyl transferase family.

The enzyme catalyses dimethylallyl diphosphate + AMP = N(6)-(dimethylallyl)adenosine 5'-phosphate + diphosphate. Transfers dimethylallyl groups to AMP as part of the biosynthesis of cytokinin phytohormones. This Ralstonia solanacearum (Pseudomonas solanacearum) protein is Adenylate dimethylallyltransferase (tzs).